The primary structure comprises 1024 residues: Beta-galactosidase (1024 aa).

Substrate-binding residues include Asn103 and Asp202. Position 202 (Asp202) interacts with Na(+). Mg(2+) contacts are provided by Glu417, His419, and Glu462. Substrate-binding positions include Glu462 and 538–541 (EYAH). The Proton donor role is filled by Glu462. Catalysis depends on Glu538, which acts as the Nucleophile. Asn598 provides a ligand contact to Mg(2+). Residues Phe602 and Asn605 each coordinate Na(+). Substrate contacts are provided by Asn605 and Trp1000.

This sequence belongs to the glycosyl hydrolase 2 family. As to quaternary structure, homotetramer. Mg(2+) serves as cofactor. Requires Na(+) as cofactor.

It carries out the reaction Hydrolysis of terminal non-reducing beta-D-galactose residues in beta-D-galactosides.. This Escherichia coli (strain ATCC 8739 / DSM 1576 / NBRC 3972 / NCIMB 8545 / WDCM 00012 / Crooks) protein is Beta-galactosidase.